Consider the following 641-residue polypeptide: ATP-dependent zinc metalloprotease FtsH (641 aa).

Residues 1–16 (MNKQQKPKRSPLRPDY) lie on the Cytoplasmic side of the membrane. The chain crosses the membrane as a helical span at residues 17–37 (LVIVIIILLAIGMYFFFTEMM). At 38 to 131 (APKVKQFDEF…VSFVPHVSVD (94 aa)) the chain is on the extracellular side. Residues 132–152 (FWNIISTLLLIAAPIVLVVIM) form a helical membrane-spanning segment. The Cytoplasmic portion of the chain corresponds to 153-641 (FRSMSSQSNK…EVEEDSKKSE (489 aa)). 222–229 (GQPGTGKT) serves as a coordination point for ATP. Residue histidine 444 coordinates Zn(2+). Glutamate 445 is a catalytic residue. Zn(2+) contacts are provided by histidine 448 and aspartate 520.

This sequence in the central section; belongs to the AAA ATPase family. The protein in the C-terminal section; belongs to the peptidase M41 family. As to quaternary structure, homohexamer. It depends on Zn(2+) as a cofactor.

The protein resides in the cell membrane. Acts as a processive, ATP-dependent zinc metallopeptidase for both cytoplasmic and membrane proteins. Plays a role in the quality control of integral membrane proteins. The sequence is that of ATP-dependent zinc metalloprotease FtsH from Acholeplasma laidlawii (strain PG-8A).